Here is a 160-residue protein sequence, read N- to C-terminus: Phosphopantetheine adenylyltransferase (160 aa).

S9 is a substrate binding site. ATP is bound by residues 9–10 (SF) and H17. 3 residues coordinate substrate: K41, V73, and K87. Residues 88-90 (GLR), E98, and 122-128 (YSFVSSS) each bind ATP.

Belongs to the bacterial CoaD family. As to quaternary structure, homohexamer. The cofactor is Mg(2+).

It is found in the cytoplasm. The catalysed reaction is (R)-4'-phosphopantetheine + ATP + H(+) = 3'-dephospho-CoA + diphosphate. It participates in cofactor biosynthesis; coenzyme A biosynthesis; CoA from (R)-pantothenate: step 4/5. Reversibly transfers an adenylyl group from ATP to 4'-phosphopantetheine, yielding dephospho-CoA (dPCoA) and pyrophosphate. The sequence is that of Phosphopantetheine adenylyltransferase from Mycobacterium leprae (strain TN).